The sequence spans 135 residues: Small ribosomal subunit protein uS11 (135 aa).

This sequence belongs to the universal ribosomal protein uS11 family. Part of the 30S ribosomal subunit. Interacts with proteins S7 and S18. Binds to IF-3.

Its function is as follows. Located on the platform of the 30S subunit, it bridges several disparate RNA helices of the 16S rRNA. Forms part of the Shine-Dalgarno cleft in the 70S ribosome. In Polynucleobacter necessarius subsp. necessarius (strain STIR1), this protein is Small ribosomal subunit protein uS11.